A 199-amino-acid polypeptide reads, in one-letter code: NAD(P)H dehydrogenase (quinone) (199 aa).

The Flavodoxin-like domain occupies 4-190 (VLVLYYSAYG…GGARYQGKVI (187 aa)). FMN is bound by residues 10–15 (SAYGHI) and 78–80 (TRF). Residue tyrosine 12 participates in NAD(+) binding. Tryptophan 98 serves as a coordination point for substrate. Residues 113–119 (STASQHG) and histidine 134 each bind FMN.

This sequence belongs to the WrbA family. The cofactor is FMN.

The catalysed reaction is a quinone + NADH + H(+) = a quinol + NAD(+). The enzyme catalyses a quinone + NADPH + H(+) = a quinol + NADP(+). This Rhodopseudomonas palustris (strain BisB18) protein is NAD(P)H dehydrogenase (quinone).